A 341-amino-acid polypeptide reads, in one-letter code: MSKRISLTQFLVEQQRQHGRIPAQLRLLIEVVARACKRIAISVNKGALGEVLGSAGSENVQGEVQKKLDIISNEVLIEANEWGGHLAAMASEEMDSIHVVPNRYPQGEYMLLFDPLDGSSNIDVNVSIGTIFSVLRKVGHQHGVSEEDFLQPGKFQAAAGYCVYGPQTTLVLTVGDGVAVFTLDRETGSFVLTQSNLQIPADTHEFAINASNHRHWAPPMKRYIDECLAGREGPRGKDFNMRWVGSMVADVHRILTRGGIFLYPWDQREPDKPGKLRLMYEANPMAFLVEQAGGAATNGEQRIMDLMPGKLHERVSVMMGSKNEVERVSQYHREHREAAGH.

Glutamate 92, aspartate 114, leucine 116, and aspartate 117 together coordinate Mg(2+). Substrate contacts are provided by residues 117 to 120 (DGSS), asparagine 209, and lysine 275. Glutamate 281 contributes to the Mg(2+) binding site.

The protein belongs to the FBPase class 1 family. In terms of assembly, homotetramer. Requires Mg(2+) as cofactor.

Its subcellular location is the cytoplasm. It carries out the reaction beta-D-fructose 1,6-bisphosphate + H2O = beta-D-fructose 6-phosphate + phosphate. It functions in the pathway carbohydrate biosynthesis; gluconeogenesis. This chain is Fructose-1,6-bisphosphatase class 1 1, found in Leptothrix cholodnii (strain ATCC 51168 / LMG 8142 / SP-6) (Leptothrix discophora (strain SP-6)).